A 559-amino-acid chain; its full sequence is Glucose-6-phosphate isomerase (559 aa).

The Proton donor role is filled by Glu363. Residues His394 and Lys523 contribute to the active site.

Belongs to the GPI family.

It is found in the cytoplasm. It catalyses the reaction alpha-D-glucose 6-phosphate = beta-D-fructose 6-phosphate. Its pathway is carbohydrate biosynthesis; gluconeogenesis. It participates in carbohydrate degradation; glycolysis; D-glyceraldehyde 3-phosphate and glycerone phosphate from D-glucose: step 2/4. Its function is as follows. Catalyzes the reversible isomerization of glucose-6-phosphate to fructose-6-phosphate. The polypeptide is Glucose-6-phosphate isomerase (Bartonella quintana (strain Toulouse) (Rochalimaea quintana)).